A 640-amino-acid polypeptide reads, in one-letter code: uncharacterized protein (640 aa).

The TIR domain maps to 184–328; that stretch reads VKRDTIFIIK…KVQRSIDTMI (145 aa). Residues 613–640 are disordered; that stretch reads LPNDLDDEDEELDDSTLGRPDSDEEGGE. The span at 616-626 shows a compositional bias: acidic residues; the sequence is DLDDEDEELDD.

This is an uncharacterized protein from Sinorhizobium fredii (strain NBRC 101917 / NGR234).